A 172-amino-acid chain; its full sequence is 3-phenylpropionate/cinnamic acid dioxygenase subunit beta (172 aa).

The protein belongs to the bacterial ring-hydroxylating dioxygenase beta subunit family. In terms of assembly, this dioxygenase system consists of four proteins: the two subunits of the hydroxylase component (HcaE and HcaF), a ferredoxin (HcaC) and a ferredoxin reductase (HcaD).

It carries out the reaction 3-phenylpropanoate + NADH + O2 + H(+) = 3-(cis-5,6-dihydroxycyclohexa-1,3-dien-1-yl)propanoate + NAD(+). It catalyses the reaction (E)-cinnamate + NADH + O2 + H(+) = (2E)-3-(cis-5,6-dihydroxycyclohexa-1,3-dien-1-yl)prop-2-enoate + NAD(+). It participates in aromatic compound metabolism; 3-phenylpropanoate degradation. Part of the multicomponent 3-phenylpropionate dioxygenase. Converts 3-phenylpropionic acid (PP) and cinnamic acid (CI) into 3-phenylpropionate-dihydrodiol (PP-dihydrodiol) and cinnamic acid-dihydrodiol (CI-dihydrodiol), respectively. This is 3-phenylpropionate/cinnamic acid dioxygenase subunit beta from Shigella flexneri serotype 5b (strain 8401).